We begin with the raw amino-acid sequence, 272 residues long: Acyl-[acyl-carrier-protein]--UDP-N-acetylglucosamine O-acyltransferase (272 aa).

It belongs to the transferase hexapeptide repeat family. LpxA subfamily. Homotrimer.

The protein resides in the cytoplasm. It carries out the reaction a (3R)-hydroxyacyl-[ACP] + UDP-N-acetyl-alpha-D-glucosamine = a UDP-3-O-[(3R)-3-hydroxyacyl]-N-acetyl-alpha-D-glucosamine + holo-[ACP]. It functions in the pathway glycolipid biosynthesis; lipid IV(A) biosynthesis; lipid IV(A) from (3R)-3-hydroxytetradecanoyl-[acyl-carrier-protein] and UDP-N-acetyl-alpha-D-glucosamine: step 1/6. Its function is as follows. Involved in the biosynthesis of lipid A, a phosphorylated glycolipid that anchors the lipopolysaccharide to the outer membrane of the cell. The polypeptide is Acyl-[acyl-carrier-protein]--UDP-N-acetylglucosamine O-acyltransferase (Methylobacterium radiotolerans (strain ATCC 27329 / DSM 1819 / JCM 2831 / NBRC 15690 / NCIMB 10815 / 0-1)).